Here is a 428-residue protein sequence, read N- to C-terminus: Mitochondrial distribution and morphology protein 12 (428 aa).

The SMP-LTD domain occupies 1-387; the sequence is MSFDINWNQL…WPSWICIDMN (387 aa). Disordered stretches follow at residues 75 to 168 and 387 to 428; these read VMNE…APPL and NDDD…EAGE. Residues 81–96 show a composition bias toward basic and acidic residues; that stretch reads NDSKDEHLKNHGDGIN. The segment covering 106-133 has biased composition (acidic residues); that stretch reads LDDEDEDDEDDDEDDEDEEEEDEDDYDD. The span at 146–161 shows a compositional bias: polar residues; that stretch reads LNFNENSTTPSANSFA. Acidic residues predominate over residues 387–403; it reads NDDDDEEEEEEESEDND. The span at 412-428 shows a compositional bias: basic and acidic residues; sequence NDGKHGDGRTDETEAGE.

It belongs to the MDM12 family. As to quaternary structure, component of the ER-mitochondria encounter structure (ERMES) or MDM complex, composed of MMM1, MDM10, MDM12 and MDM34. An MMM1 homodimer associates with one molecule of MDM12 on each side in a pairwise head-to-tail manner, and the SMP-LTD domains of MMM1 and MDM12 generate a continuous hydrophobic tunnel for phospholipid trafficking.

The protein resides in the mitochondrion outer membrane. Its subcellular location is the endoplasmic reticulum membrane. Its function is as follows. Component of the ERMES/MDM complex, which serves as a molecular tether to connect the endoplasmic reticulum (ER) and mitochondria. Components of this complex are involved in the control of mitochondrial shape and protein biogenesis, and function in nonvesicular lipid trafficking between the ER and mitochondria. MDM12 is required for the interaction of the ER-resident membrane protein MMM1 and the outer mitochondrial membrane-resident beta-barrel protein MDM10. The MDM12-MMM1 subcomplex functions in the major beta-barrel assembly pathway that is responsible for biogenesis of all mitochondrial outer membrane beta-barrel proteins, and acts in a late step after the SAM complex. The MDM10-MDM12-MMM1 subcomplex further acts in the TOM40-specific pathway after the action of the MDM12-MMM1 complex. Essential for establishing and maintaining the structure of mitochondria and maintenance of mtDNA nucleoids. In Candida albicans (strain SC5314 / ATCC MYA-2876) (Yeast), this protein is Mitochondrial distribution and morphology protein 12.